A 219-amino-acid chain; its full sequence is 7-cyano-7-deazaguanine synthase (219 aa).

ATP is bound at residue 10-20; sequence FSGGQDSTTCL. The Zn(2+) site is built by cysteine 188, cysteine 196, cysteine 199, and cysteine 202.

Belongs to the QueC family. Zn(2+) is required as a cofactor.

It catalyses the reaction 7-carboxy-7-deazaguanine + NH4(+) + ATP = 7-cyano-7-deazaguanine + ADP + phosphate + H2O + H(+). It participates in purine metabolism; 7-cyano-7-deazaguanine biosynthesis. Functionally, catalyzes the ATP-dependent conversion of 7-carboxy-7-deazaguanine (CDG) to 7-cyano-7-deazaguanine (preQ(0)). The chain is 7-cyano-7-deazaguanine synthase from Neisseria meningitidis serogroup A / serotype 4A (strain DSM 15465 / Z2491).